Consider the following 192-residue polypeptide: Signal peptidase complex subunit 2 (192 aa).

Residues 1 to 46 (MEEKKTESTNKNVKKANLLDHHSIKHILDESVSDIVTSRGYKEDVR) are Cytoplasmic-facing. A helical transmembrane segment spans residues 47–69 (LSNLKLILGTIIIVVALVAQFYN). The Lumenal segment spans residues 70–78 (KKFPENRDF). Residues 79–98 (LIGCIALYVVLNAVLQLILY) traverse the membrane as a helical segment. Over 99 to 192 (TKEKNAILFT…YAEEEPKKKK (94 aa)) the chain is Cytoplasmic.

This sequence belongs to the SPCS2 family. In terms of assembly, component of the signal peptidase complex (SPC) composed of a catalytic subunit SEC11 and three accessory subunits SPCS1, SPCS2 and SPCS3. The complex induces a local thinning of the ER membrane which is used to measure the length of the signal peptide (SP) h-region of protein substrates. This ensures the selectivity of the complex towards h-regions shorter than 18-20 amino acids.

It is found in the endoplasmic reticulum membrane. In terms of biological role, component of the signal peptidase complex (SPC) which catalyzes the cleavage of N-terminal signal sequences from nascent proteins as they are translocated into the lumen of the endoplasmic reticulum. Enhances the enzymatic activity of SPC and facilitates the interactions between different components of the translocation site. The polypeptide is Signal peptidase complex subunit 2 (Arabidopsis thaliana (Mouse-ear cress)).